Consider the following 667-residue polypeptide: E3 ubiquitin-protein ligase Midline-1 (667 aa).

The segment at 10–60 adopts an RING-type zinc-finger fold; the sequence is CPICLELFEDPLLLPCAHSLCFNCAHRILVSHCATNEPVESINAFQCPTCR. 2 positions are modified to phosphoserine: Ser92 and Ser96. B box-type zinc fingers lie at residues 116-165 and 172-212; these read KVLC…IEPI and GLMC…VAAL. Residues Cys119, Cys122, Cys134, Cys137, Cys142, Cys145, His150, His159, Cys175, His178, Cys198, and His204 each coordinate Zn(2+). A coiled-coil region spans residues 205–264; sequence RDHQVAALSERYDKLKQNLESNLTNLIKRNTELETLLAKLIQTCQHVEVNASRQEAKLTE. The 60-residue stretch at 320–379 folds into the COS domain; sequence LKENDHARFLQTAKNITERVSMATASSQVLIPEINLNDTFDTFALDFSREKKLLECLDYL. Residues 381–484 form the Fibronectin type-III domain; that stretch reads APNPPTIREE…EPGKLKTNSQ (104 aa). A compositionally biased stretch (polar residues) spans 471-485; it reads SRSSEPGKLKTNSQP. Residues 471-524 are disordered; that stretch reads SRSSEPGKLKTNSQPFKLDPKSAHRKLKVSHDNLTVERDESSSKKSHTPERFTS. Positions 482 to 659 constitute a B30.2/SPRY domain; it reads NSQPFKLDPK…IITGLPIPDH (178 aa). Residues 499–520 are compositionally biased toward basic and acidic residues; it reads VSHDNLTVERDESSSKKSHTPE. Residue Ser511 is modified to Phosphoserine.

The protein belongs to the TRIM/RBCC family. Homodimer or heterodimer with MID2. Interacts with IGBP1.

The protein localises to the cytoplasm. Its subcellular location is the cytoskeleton. It catalyses the reaction S-ubiquitinyl-[E2 ubiquitin-conjugating enzyme]-L-cysteine + [acceptor protein]-L-lysine = [E2 ubiquitin-conjugating enzyme]-L-cysteine + N(6)-ubiquitinyl-[acceptor protein]-L-lysine.. Has E3 ubiquitin ligase activity towards IGBP1, promoting its monoubiquitination, which results in deprotection of the catalytic subunit of protein phosphatase PP2A, and its subsequent degradation by polyubiquitination. The protein is E3 ubiquitin-protein ligase Midline-1 (Mid1) of Rattus norvegicus (Rat).